Reading from the N-terminus, the 388-residue chain is Protein TsgA homolog (388 aa).

Transmembrane regions (helical) follow at residues 11–31 (WISF…GMIM), 50–70 (TFLN…IEII), 77–97 (IFSF…NSIF), 101–121 (INMF…TFII), 133–153 (LLLL…IVTA), 160–180 (IIWY…FLLT), 206–226 (VFLL…FISW), 244–264 (SLVS…SFII), 268–288 (NLYR…YCFI), 298–318 (YIII…ITLA), 332–352 (LILL…SPIV), and 360–380 (TLIS…LIYF).

The protein belongs to the major facilitator superfamily. TsgA family.

It is found in the cell membrane. The sequence is that of Protein TsgA homolog from Buchnera aphidicola subsp. Acyrthosiphon pisum (strain Tuc7).